A 394-amino-acid chain; its full sequence is Elongation factor Tu (394 aa).

The 195-residue stretch at 10–204 (KPHVNVGTIG…ALDSYIPEPE (195 aa)) folds into the tr-type G domain. The interval 19-26 (GHVDHGKT) is G1. 19 to 26 (GHVDHGKT) serves as a coordination point for GTP. Threonine 26 contributes to the Mg(2+) binding site. The interval 60–64 (GITIA) is G2. Residues 81 to 84 (DCPG) are G3. GTP-binding positions include 81–85 (DCPGH) and 136–139 (NKCD). Residues 136–139 (NKCD) form a G4 region. Residues 174 to 176 (SAL) form a G5 region.

The protein belongs to the TRAFAC class translation factor GTPase superfamily. Classic translation factor GTPase family. EF-Tu/EF-1A subfamily. In terms of assembly, monomer.

It is found in the cytoplasm. The catalysed reaction is GTP + H2O = GDP + phosphate + H(+). GTP hydrolase that promotes the GTP-dependent binding of aminoacyl-tRNA to the A-site of ribosomes during protein biosynthesis. This is Elongation factor Tu from Vibrio campbellii (strain ATCC BAA-1116).